Here is a 376-residue protein sequence, read N- to C-terminus: Protein insensitive (376 aa).

Residues 50-79 adopt a coiled-coil conformation; the sequence is QVEVENRALRDKVRYLEAKLQQHKDLLSQI. The 99-residue stretch at 258-356 folds into the BEN domain; it reads GPNNTCVPAS…TKCADENKMM (99 aa).

In terms of assembly, homodimer. Interacts (via BEN domain) with Su(H). Interacts with Cp190.

The protein localises to the nucleus. Its function is as follows. Can act as both a transcriptional repressor and corepressor. Represses the expression of genes involved in neural development and preferentially binds palindromic sequence 5'-CCAATTGG-3' to mediate transcriptional repression. Acts as a corepressor for suppressor of hairless (Su(H)) and inhibits Notch signaling during peripheral nervous system development. The chain is Protein insensitive (insv) from Drosophila melanogaster (Fruit fly).